We begin with the raw amino-acid sequence, 103 residues long: Small ribosomal subunit protein uS14c (103 aa).

This sequence belongs to the universal ribosomal protein uS14 family. In terms of assembly, part of the 30S ribosomal subunit.

The protein localises to the plastid. It is found in the chloroplast. Functionally, binds 16S rRNA, required for the assembly of 30S particles. This is Small ribosomal subunit protein uS14c from Oryza nivara (Indian wild rice).